The chain runs to 545 residues: Threonine--tRNA ligase catalytic subunit (545 aa).

Residues 139–433 are catalytic; it reads DHRLIGEKLD…LLEHFKGKLP (295 aa). Residues cysteine 231, histidine 282, and histidine 410 each coordinate Zn(2+).

The protein belongs to the class-II aminoacyl-tRNA synthetase family. In terms of assembly, homodimer. Probably interacts with its editing subunit. The cofactor is Zn(2+).

The protein localises to the cytoplasm. The enzyme catalyses tRNA(Thr) + L-threonine + ATP = L-threonyl-tRNA(Thr) + AMP + diphosphate + H(+). In terms of biological role, catalyzes the attachment of threonine to tRNA(Thr) in a two-step reaction: L-threonine is first activated by ATP to form Thr-AMP and then transferred to the acceptor end of tRNA(Thr). Also activates L-serine and transfers it to tRNA(Thr) but cannot deacylate incorrectly charged amino acid; unlike most archaea the editing function is found in a freestanding protein. The polypeptide is Threonine--tRNA ligase catalytic subunit (Saccharolobus islandicus (strain Y.G.57.14 / Yellowstone #1) (Sulfolobus islandicus)).